Consider the following 248-residue polypeptide: mRNA-decapping protein OPG122 (248 aa).

In terms of domain architecture, Nudix hydrolase spans 45–227 (HKRVSVSAIL…IAKYALDTAK (183 aa)). A Nudix box motif is present at residues 125–147 (GGILKRGENVPECLSREIKEEVN). Residue glutamate 132 participates in Mg(2+) binding. Glutamate 141 (nucleophile) is an active-site residue. Glutamate 145 is a binding site for Mn(2+). Aspartate 167 contributes to the Mg(2+) binding site.

Belongs to the Nudix hydrolase family. It depends on Mg(2+) as a cofactor. Requires Mn(2+) as cofactor.

It is found in the host mitochondrion. Functionally, decapping enzyme that remove the protective 5'-cap from both host and viral mRNAs to commit transcripts for decay by the cellular exonuclease XRN1. Preferentially targets spliced mRNAs and since all viral genes are intronless, it preferentially targets host over viral transcripts. Acceleration of the turnover of cellular transcripts promotes the shutoff of host protein synthesis and therefore diminish the magnitude of antiviral response. In Variola virus (isolate Human/India/Ind3/1967) (VARV), this protein is mRNA-decapping protein OPG122 (OPG122).